Here is a 471-residue protein sequence, read N- to C-terminus: ATP synthase subunit beta (471 aa).

157 to 164 (GGAGVGKT) provides a ligand contact to ATP.

This sequence belongs to the ATPase alpha/beta chains family. F-type ATPases have 2 components, CF(1) - the catalytic core - and CF(0) - the membrane proton channel. CF(1) has five subunits: alpha(3), beta(3), gamma(1), delta(1), epsilon(1). CF(0) has three main subunits: a(1), b(2) and c(9-12). The alpha and beta chains form an alternating ring which encloses part of the gamma chain. CF(1) is attached to CF(0) by a central stalk formed by the gamma and epsilon chains, while a peripheral stalk is formed by the delta and b chains.

The protein localises to the cell inner membrane. It carries out the reaction ATP + H2O + 4 H(+)(in) = ADP + phosphate + 5 H(+)(out). Functionally, produces ATP from ADP in the presence of a proton gradient across the membrane. The catalytic sites are hosted primarily by the beta subunits. The polypeptide is ATP synthase subunit beta (Trichlorobacter lovleyi (strain ATCC BAA-1151 / DSM 17278 / SZ) (Geobacter lovleyi)).